The sequence spans 423 residues: Putative competence-damage inducible protein (423 aa).

Belongs to the CinA family.

The sequence is that of Putative competence-damage inducible protein from Streptococcus thermophilus (strain ATCC BAA-491 / LMD-9).